The primary structure comprises 116 residues: Large ribosomal subunit protein uL18 (116 aa).

Belongs to the universal ribosomal protein uL18 family. Part of the 50S ribosomal subunit; part of the 5S rRNA/L5/L18/L25 subcomplex. Contacts the 5S and 23S rRNAs.

This is one of the proteins that bind and probably mediate the attachment of the 5S RNA into the large ribosomal subunit, where it forms part of the central protuberance. This chain is Large ribosomal subunit protein uL18, found in Pseudomonas fluorescens (strain SBW25).